Here is a 1001-residue protein sequence, read N- to C-terminus: TonB-dependent receptor P3 (1001 aa).

Positions 1–26 (MTTKNNKQLKSVLFMFLLLIGAYVKA) are cleaved as a signal peptide. A TonB box motif is present at residues 109-116 (EEIVVIGY). Residues 120 to 232 (KKSDVSGSVS…ANGVIMVTTK (113 aa)) form the TBDR plug domain. The TBDR beta-barrel domain maps to 238–1001 (KPTLELNTSY…TFTMGLNMKF (764 aa)). Residues 984–1001 (YGSYPNVRTFTMGLNMKF) carry the TonB C-terminal box motif.

The protein belongs to the TonB-dependent receptor family.

The protein localises to the cell outer membrane. Functionally, tonB-dependent receptor probably involved in ulvan degradation. Ulvan is the main polysaccharide component of the Ulvales (green seaweed) cell wall. It is composed of disaccharide building blocks comprising 3-sulfated rhamnose (Rha3S) linked to D-glucuronic acid (GlcA), L-iduronic acid (IduA), or D-xylose (Xyl). The TonB-dependent receptor may mediate transport of ulvan oligosaccharides from the surface of the outer membrane to the periplasm for subsequent degradation. In Formosa agariphila (strain DSM 15362 / KCTC 12365 / LMG 23005 / KMM 3901 / M-2Alg 35-1), this protein is TonB-dependent receptor P3.